A 518-amino-acid chain; its full sequence is Membrane-bound lytic murein transglycosylase F (518 aa).

Residues 1–21 (MKKLKINYLFIGILALLLAVA) form the signal peptide. The tract at residues 22–269 (LWPSIPWFGK…RIEEKYLGHG (248 aa)) is non-LT domain. Residues 270–518 (DDFDYVDTRT…SRKGSEEKQN (249 aa)) are LT domain. Residue Glu-314 is part of the active site.

It in the N-terminal section; belongs to the bacterial solute-binding protein 3 family. This sequence in the C-terminal section; belongs to the transglycosylase Slt family.

The protein resides in the cell outer membrane. The catalysed reaction is Exolytic cleavage of the (1-&gt;4)-beta-glycosidic linkage between N-acetylmuramic acid (MurNAc) and N-acetylglucosamine (GlcNAc) residues in peptidoglycan, from either the reducing or the non-reducing ends of the peptidoglycan chains, with concomitant formation of a 1,6-anhydrobond in the MurNAc residue.. Functionally, murein-degrading enzyme that degrades murein glycan strands and insoluble, high-molecular weight murein sacculi, with the concomitant formation of a 1,6-anhydromuramoyl product. Lytic transglycosylases (LTs) play an integral role in the metabolism of the peptidoglycan (PG) sacculus. Their lytic action creates space within the PG sacculus to allow for its expansion as well as for the insertion of various structures such as secretion systems and flagella. This is Membrane-bound lytic murein transglycosylase F from Shigella dysenteriae serotype 1 (strain Sd197).